A 276-amino-acid polypeptide reads, in one-letter code: Protease HtpX homolog (276 aa).

The helical transmembrane segment at leucine 16–valine 36 threads the bilayer. A Zn(2+)-binding site is contributed by histidine 130. Glutamate 131 is an active-site residue. Histidine 134 is a binding site for Zn(2+). Helical transmembrane passes span isoleucine 142–phenylalanine 162 and isoleucine 173–threonine 193. Glutamate 199 contributes to the Zn(2+) binding site.

It belongs to the peptidase M48B family. Zn(2+) is required as a cofactor.

Its subcellular location is the cell inner membrane. This Sulfurovum sp. (strain NBC37-1) protein is Protease HtpX homolog.